The following is a 363-amino-acid chain: S-adenosylmethionine:tRNA ribosyltransferase-isomerase (363 aa).

It belongs to the QueA family. In terms of assembly, monomer.

It localises to the cytoplasm. It carries out the reaction 7-aminomethyl-7-carbaguanosine(34) in tRNA + S-adenosyl-L-methionine = epoxyqueuosine(34) in tRNA + adenine + L-methionine + 2 H(+). The protein operates within tRNA modification; tRNA-queuosine biosynthesis. Transfers and isomerizes the ribose moiety from AdoMet to the 7-aminomethyl group of 7-deazaguanine (preQ1-tRNA) to give epoxyqueuosine (oQ-tRNA). The sequence is that of S-adenosylmethionine:tRNA ribosyltransferase-isomerase from Haemophilus influenzae (strain PittGG).